Here is a 246-residue protein sequence, read N- to C-terminus: 3-deoxy-manno-octulosonate cytidylyltransferase (246 aa).

Belongs to the KdsB family.

Its subcellular location is the cytoplasm. The enzyme catalyses 3-deoxy-alpha-D-manno-oct-2-ulosonate + CTP = CMP-3-deoxy-beta-D-manno-octulosonate + diphosphate. It functions in the pathway nucleotide-sugar biosynthesis; CMP-3-deoxy-D-manno-octulosonate biosynthesis; CMP-3-deoxy-D-manno-octulosonate from 3-deoxy-D-manno-octulosonate and CTP: step 1/1. Its pathway is bacterial outer membrane biogenesis; lipopolysaccharide biosynthesis. Its function is as follows. Activates KDO (a required 8-carbon sugar) for incorporation into bacterial lipopolysaccharide in Gram-negative bacteria. This chain is 3-deoxy-manno-octulosonate cytidylyltransferase, found in Rickettsia massiliae (strain Mtu5).